We begin with the raw amino-acid sequence, 617 residues long: Coiled-coil domain-containing protein 93 (617 aa).

Basic and acidic residues predominate over residues 1–16 (MVVPRGQEHRAPQEVE). The tract at residues 1 to 20 (MVVPRGQEHRAPQEVETRED) is disordered. Coiled coils occupy residues 285 to 474 (DEIK…IDEV) and 546 to 614 (LRQM…KLKA).

Belongs to the CCDC93 family.

It is found in the early endosome. May be involved in copper-dependent ATP7A trafficking between the trans-Golgi network and vesicles in the cell periphery. The polypeptide is Coiled-coil domain-containing protein 93 (CCDC93) (Gallus gallus (Chicken)).